Reading from the N-terminus, the 320-residue chain is MVGYDPKPDGRNNTKLQVAVAGSVSGLVTRALISPFDVIKIRFQLQHERLSRRDPNAKYHGIFQASRQILQEEGLTAFWKGHIPAQILSIGYGAVQFLSFEMLTELVHRGSVYDAREFSVHFVCGGLAACTATLTVHPVDVLRTRFAAQGEPKVYNTLRHAVGTMYRSEGPQVFYKGLAPTLIAIFPYAGLQFSCYSSLKHLYKWAMPAEGKKNENLQNLLCGSGAGVISKTLTYPLDLFKKRLQVGGFEHARAAFGQVRRYKGLMDCAKQVLQKEGALGFFKGLSPSLLKAALSTGFMFFWYEFFCNVFHCMNRTASQR.

3 Solcar repeats span residues 13–106 (NTKL…LTEL), 116–202 (REFS…LKHL), and 214–309 (NENL…FCNV). The helical transmembrane segment at 19 to 39 (AVAGSVSGLVTRALISPFDVI) threads the bilayer. Position 51 is a phosphoserine (Ser51). Helical transmembrane passes span 87 to 107 (ILSIGYGAVQFLSFEMLTELV), 122 to 142 (FVCGGLAACTATLTVHPVDVL), 173 to 193 (VFYKGLAPTLIAIFPYAGLQF), and 220 to 240 (LLCGSGAGVISKTLTYPLDLF). The Substrate recognition signature appears at 241-246 (KKRLQV). The helical transmembrane segment at 293 to 313 (ALSTGFMFFWYEFFCNVFHCM) threads the bilayer.

Belongs to the mitochondrial carrier (TC 2.A.29) family.

It localises to the mitochondrion membrane. The catalysed reaction is thiamine phosphate(out) + thiamine diphosphate(in) = thiamine phosphate(in) + thiamine diphosphate(out). Functionally, mitochondrial transporter mediating uptake of thiamine diphosphate into mitochondria. It is not clear if the antiporter activity is affected by the membrane potential or by the proton electrochemical gradient. This Macaca fascicularis (Crab-eating macaque) protein is Mitochondrial thiamine pyrophosphate carrier (SLC25A19).